A 507-amino-acid chain; its full sequence is ATP synthase subunit alpha, chloroplastic (507 aa).

Glycine 170–threonine 177 provides a ligand contact to ATP.

Belongs to the ATPase alpha/beta chains family. As to quaternary structure, F-type ATPases have 2 components, CF(1) - the catalytic core - and CF(0) - the membrane proton channel. CF(1) has five subunits: alpha(3), beta(3), gamma(1), delta(1), epsilon(1). CF(0) has four main subunits: a, b, b' and c.

The protein resides in the plastid. Its subcellular location is the chloroplast thylakoid membrane. It catalyses the reaction ATP + H2O + 4 H(+)(in) = ADP + phosphate + 5 H(+)(out). In terms of biological role, produces ATP from ADP in the presence of a proton gradient across the membrane. The alpha chain is a regulatory subunit. In Buxus microphylla (Littleleaf boxwood), this protein is ATP synthase subunit alpha, chloroplastic.